Consider the following 328-residue polypeptide: uncharacterized protein (328 aa).

Coiled coils occupy residues 67–190 (FKEQ…VLEE) and 223–251 (MAQRQKQEEVQEVLQEAEKTHQATLDNMM).

This is an uncharacterized protein from Mus musculus (Mouse).